Reading from the N-terminus, the 569-residue chain is Urease subunit alpha (569 aa).

Residues 131-569 enclose the Urease domain; the sequence is GSIDTHIHFI…VPMAQRYFLL (439 aa). Ni(2+) is bound by residues His136, His138, and Lys219. The residue at position 219 (Lys219) is an N6-carboxylysine. Residue His221 coordinates substrate. The Ni(2+) site is built by His248 and His274. His322 serves as the catalytic Proton donor. Asp362 contributes to the Ni(2+) binding site.

Belongs to the metallo-dependent hydrolases superfamily. Urease alpha subunit family. In terms of assembly, heterotrimer of UreA (gamma), UreB (beta) and UreC (alpha) subunits. Three heterotrimers associate to form the active enzyme. Ni cation serves as cofactor. Carboxylation allows a single lysine to coordinate two nickel ions.

Its subcellular location is the cytoplasm. The catalysed reaction is urea + 2 H2O + H(+) = hydrogencarbonate + 2 NH4(+). Its pathway is nitrogen metabolism; urea degradation; CO(2) and NH(3) from urea (urease route): step 1/1. This is Urease subunit alpha from Prochlorococcus marinus (strain MIT 9215).